The primary structure comprises 218 residues: Small ribosomal subunit protein uS3c (218 aa).

The region spanning 39–118 (IRNFIKNYVQ…KLNIAITRIA (80 aa)) is the KH type-2 domain.

The protein belongs to the universal ribosomal protein uS3 family. In terms of assembly, part of the 30S ribosomal subunit.

The protein localises to the plastid. The protein resides in the chloroplast. This chain is Small ribosomal subunit protein uS3c (rps3), found in Ipomoea purpurea (Common morning glory).